The primary structure comprises 528 residues: Lanosterol 14-alpha demethylase (528 aa).

A helical transmembrane segment spans residues 15 to 37; that stretch reads LSLSVTQQISILLGVPFVYNLVW. Residue tyrosine 64 participates in oteseconazole binding. Tyrosine 118 contributes to the itraconazole binding site. Glycine 307 provides a ligand contact to posaconazole. An oteseconazole-binding site is contributed by histidine 377. Residue cysteine 470 coordinates heme.

This sequence belongs to the cytochrome P450 family. Heme is required as a cofactor.

The protein localises to the endoplasmic reticulum membrane. It catalyses the reaction a 14alpha-methyl steroid + 3 reduced [NADPH--hemoprotein reductase] + 3 O2 = a Delta(14) steroid + formate + 3 oxidized [NADPH--hemoprotein reductase] + 4 H2O + 4 H(+). The catalysed reaction is a 14alpha-methyl steroid + reduced [NADPH--hemoprotein reductase] + O2 = a 14alpha-hydroxymethyl steroid + oxidized [NADPH--hemoprotein reductase] + H2O + H(+). It carries out the reaction a 14alpha-hydroxymethyl steroid + reduced [NADPH--hemoprotein reductase] + O2 = a 14alpha-formyl steroid + oxidized [NADPH--hemoprotein reductase] + 2 H2O + H(+). The enzyme catalyses a 14alpha-formyl steroid + reduced [NADPH--hemoprotein reductase] + O2 = a Delta(14) steroid + formate + oxidized [NADPH--hemoprotein reductase] + H2O + 2 H(+). It catalyses the reaction lanosterol + 3 reduced [NADPH--hemoprotein reductase] + 3 O2 = 4,4-dimethyl-5alpha-cholesta-8,14,24-trien-3beta-ol + formate + 3 oxidized [NADPH--hemoprotein reductase] + 4 H2O + 4 H(+). The catalysed reaction is lanosterol + reduced [NADPH--hemoprotein reductase] + O2 = 32-hydroxylanosterol + oxidized [NADPH--hemoprotein reductase] + H2O + H(+). It carries out the reaction 32-hydroxylanosterol + reduced [NADPH--hemoprotein reductase] + O2 = 32-oxolanosterol + oxidized [NADPH--hemoprotein reductase] + 2 H2O + H(+). The enzyme catalyses 32-oxolanosterol + reduced [NADPH--hemoprotein reductase] + O2 = 4,4-dimethyl-5alpha-cholesta-8,14,24-trien-3beta-ol + formate + oxidized [NADPH--hemoprotein reductase] + H2O + 2 H(+). It catalyses the reaction eburicol + 3 reduced [NADPH--hemoprotein reductase] + 3 O2 = 14-demethyleburicol + formate + 3 oxidized [NADPH--hemoprotein reductase] + 4 H2O + 4 H(+). The catalysed reaction is eburicol + reduced [NADPH--hemoprotein reductase] + O2 = 32-hydroxyeburicol + oxidized [NADPH--hemoprotein reductase] + H2O + H(+). It carries out the reaction 32-hydroxyeburicol + reduced [NADPH--hemoprotein reductase] + O2 = 32-oxoeburicol + oxidized [NADPH--hemoprotein reductase] + 2 H2O + H(+). The enzyme catalyses 32-oxoeburicol + reduced [NADPH--hemoprotein reductase] + O2 = 14-demethyleburicol + formate + oxidized [NADPH--hemoprotein reductase] + H2O + 2 H(+). The protein operates within steroid biosynthesis; zymosterol biosynthesis; zymosterol from lanosterol: step 1/6. The catalytic activity is inhibited by the binding of azoles clotrimazole, miconazole, fluconazole, ketoconazole, oteseconazole (VT-1161), tetraconazole, the triazole SCH39304, and the triazole derivative ICI 153066. Sterol 14alpha-demethylase that plays a critical role in the third module of ergosterol biosynthesis pathway, being ergosterol the major sterol component in fungal membranes that participates in a variety of functions. The third module or late pathway involves the ergosterol synthesis itself through consecutive reactions that mainly occur in the endoplasmic reticulum (ER) membrane. In filamentous fungi, during the initial step of this module, lanosterol (lanosta-8,24-dien-3beta-ol) can be metabolized to eburicol. Sterol 14alpha-demethylase catalyzes the three-step oxidative removal of the 14alpha-methyl group (C-32) of both these sterols in the form of formate, and converts eburicol and lanosterol to 14-demethyleburicol (4,4,24-trimethylergosta-8,14,24(28)-trienol) and 4,4-dimethyl-5alpha-cholesta-8,14,24-trien-3beta-ol, respectively, which are further metabolized by other enzymes in the pathway to ergosterol. Can also use substrates not intrinsic to fungi, such as 24,25-dihydrolanosterol (DHL), producing 4,4-dimethyl-8,14-cholestadien-3-beta-ol, but at lower rates than the endogenous substrates. The protein is Lanosterol 14-alpha demethylase of Candida albicans (strain SC5314 / ATCC MYA-2876) (Yeast).